We begin with the raw amino-acid sequence, 435 residues long: 3-ketoacyl-CoA thiolase (435 aa).

Cys98 acts as the Acyl-thioester intermediate in catalysis. Active-site proton acceptor residues include His391 and Cys421.

It belongs to the thiolase-like superfamily. Thiolase family. Heterotetramer of two alpha chains (FadJ) and two beta chains (FadI).

The protein localises to the cytoplasm. The catalysed reaction is an acyl-CoA + acetyl-CoA = a 3-oxoacyl-CoA + CoA. It functions in the pathway lipid metabolism; fatty acid beta-oxidation. In terms of biological role, catalyzes the final step of fatty acid oxidation in which acetyl-CoA is released and the CoA ester of a fatty acid two carbons shorter is formed. This Colwellia psychrerythraea (strain 34H / ATCC BAA-681) (Vibrio psychroerythus) protein is 3-ketoacyl-CoA thiolase.